We begin with the raw amino-acid sequence, 402 residues long: Cytochrome b561 and DOMON domain-containing protein At4g17280 (402 aa).

A signal peptide spans 1–31 (MSNHMSIMKFLNQILCLSLILSISMTTLSFA). The 118-residue stretch at 54–171 (LDSFLHYTYE…GTINTVWQDG (118 aa)) folds into the DOMON domain. In terms of domain architecture, Cytochrome b561 spans 183–379 (TSGNNVRSVS…LEAFTWYVVI (197 aa)). The next 2 membrane-spanning stretches (helical) occupy residues 218–238 (IHGI…AIIA) and 250–270 (AWFY…VAGW). Residues H219, H255, and H288 each coordinate heme b. A helical membrane pass occupies residues 290-310 (AIGIALFSLATVQVFAMFLRP). H324 is a binding site for heme b. A run of 2 helical transmembrane segments spans residues 326 to 346 (TIGY…LGIL) and 359 to 379 (IIVV…YVVI).

Heme b serves as cofactor.

Its subcellular location is the membrane. Functionally, may act as a catecholamine-responsive trans-membrane electron transporter. This is Cytochrome b561 and DOMON domain-containing protein At4g17280 from Arabidopsis thaliana (Mouse-ear cress).